The primary structure comprises 189 residues: UPF0312 protein VC_A0539 (189 aa).

An N-terminal signal peptide occupies residues 1-22 (MKKTLMAVGLAAVMSIPFAANA).

The protein belongs to the UPF0312 family. Type 1 subfamily.

The protein resides in the periplasm. The polypeptide is UPF0312 protein VC_A0539 (Vibrio cholerae serotype O1 (strain ATCC 39315 / El Tor Inaba N16961)).